Consider the following 100-residue polypeptide: Small ribosomal subunit protein uS14c (100 aa).

The protein belongs to the universal ribosomal protein uS14 family. As to quaternary structure, part of the 30S ribosomal subunit.

Its subcellular location is the plastid. It localises to the chloroplast. Its function is as follows. Binds 16S rRNA, required for the assembly of 30S particles. This is Small ribosomal subunit protein uS14c from Aethionema grandiflorum (Persian stone-cress).